Consider the following 1770-residue polypeptide: U3 small nucleolar RNA-associated protein 10 (1770 aa).

2 helical membrane passes run 499–519 and 528–548; these read ILGLFIEAIGTGYQAGLFLSS and LTFLLRVIVSPSAPIALRLLA. One copy of the HEAT repeat lies at 1730–1768; that stretch reads MVPIIAELLEDDNEEVESEVRGGLVRVMENVLGEPFDRY.

Belongs to the HEATR1/UTP10 family. Component of the ribosomal small subunit (SSU) processome.

Its subcellular location is the nucleus. The protein resides in the nucleolus. It localises to the membrane. Involved in nucleolar processing of pre-18S ribosomal RNA. Involved in ribosome biosynthesis. The polypeptide is U3 small nucleolar RNA-associated protein 10 (Candida glabrata (strain ATCC 2001 / BCRC 20586 / JCM 3761 / NBRC 0622 / NRRL Y-65 / CBS 138) (Yeast)).